The sequence spans 367 residues: tRNA-specific 2-thiouridylase MnmA (367 aa).

Residues 11-18 and M37 contribute to the ATP site; that span reads GLSGGVDS. The tract at residues 109–111 is interaction with target base in tRNA; sequence NPD. C114 (nucleophile) is an active-site residue. C114 and C211 are disulfide-bonded. G139 lines the ATP pocket. Positions 161 to 163 are interaction with tRNA; that stretch reads KDQ. C211 acts as the Cysteine persulfide intermediate in catalysis.

The protein belongs to the MnmA/TRMU family.

The protein localises to the cytoplasm. It catalyses the reaction S-sulfanyl-L-cysteinyl-[protein] + uridine(34) in tRNA + AH2 + ATP = 2-thiouridine(34) in tRNA + L-cysteinyl-[protein] + A + AMP + diphosphate + H(+). Functionally, catalyzes the 2-thiolation of uridine at the wobble position (U34) of tRNA, leading to the formation of s(2)U34. The sequence is that of tRNA-specific 2-thiouridylase MnmA from Mycoplasma genitalium (strain ATCC 33530 / DSM 19775 / NCTC 10195 / G37) (Mycoplasmoides genitalium).